Consider the following 60-residue polypeptide: Large ribosomal subunit protein bL32 (60 aa).

The protein belongs to the bacterial ribosomal protein bL32 family.

The chain is Large ribosomal subunit protein bL32 from Synechococcus sp. (strain JA-3-3Ab) (Cyanobacteria bacterium Yellowstone A-Prime).